A 298-amino-acid polypeptide reads, in one-letter code: Porphobilinogen deaminase (298 aa).

An S-(dipyrrolylmethanemethyl)cysteine modification is found at C242.

This sequence belongs to the HMBS family. Monomer. Dipyrromethane serves as cofactor.

It carries out the reaction 4 porphobilinogen + H2O = hydroxymethylbilane + 4 NH4(+). The protein operates within porphyrin-containing compound metabolism; protoporphyrin-IX biosynthesis; coproporphyrinogen-III from 5-aminolevulinate: step 2/4. Its function is as follows. Tetrapolymerization of the monopyrrole PBG into the hydroxymethylbilane pre-uroporphyrinogen in several discrete steps. The chain is Porphobilinogen deaminase from Fusobacterium nucleatum subsp. nucleatum (strain ATCC 25586 / DSM 15643 / BCRC 10681 / CIP 101130 / JCM 8532 / KCTC 2640 / LMG 13131 / VPI 4355).